The primary structure comprises 85 residues: Neurotoxin BmKAEP2 (85 aa).

An N-terminal signal peptide occupies residues 1–21 (MKLFLLLVISASMLIDGLVNA). Residues 22 to 82 (DGYIRGSNGC…TWKSESNTCG (61 aa)) enclose the LCN-type CS-alpha/beta domain. 4 disulfide bridges follow: Cys31–Cys81, Cys35–Cys56, Cys42–Cys63, and Cys46–Cys65.

The protein belongs to the long (4 C-C) scorpion toxin superfamily. Sodium channel inhibitor family. Beta subfamily. As to expression, expressed by the venom gland.

It is found in the secreted. Its function is as follows. Depressant insect beta-toxins cause a transient contraction paralysis followed by a slow flaccid paralysis. They bind voltage-independently at site-4 of sodium channels (Nav) and shift the voltage of activation toward more negative potentials thereby affecting sodium channel activation and promoting spontaneous and repetitive firing. This toxin is active only on insects. Has potential anti-epilepsy effect. This is Neurotoxin BmKAEP2 from Olivierus martensii (Manchurian scorpion).